We begin with the raw amino-acid sequence, 388 residues long: Galactokinase (388 aa).

33 to 36 serves as a coordination point for substrate; the sequence is EHTD. Residues S67 and 125 to 131 contribute to the ATP site; that span reads GSGLSSS. Residues S131 and E163 each coordinate Mg(2+). D175 (proton acceptor) is an active-site residue. Y225 provides a ligand contact to substrate.

This sequence belongs to the GHMP kinase family. GalK subfamily.

The protein resides in the cytoplasm. It catalyses the reaction alpha-D-galactose + ATP = alpha-D-galactose 1-phosphate + ADP + H(+). Its pathway is carbohydrate metabolism; galactose metabolism. In terms of biological role, catalyzes the transfer of the gamma-phosphate of ATP to D-galactose to form alpha-D-galactose-1-phosphate (Gal-1-P). The protein is Galactokinase of Lactobacillus helveticus (Lactobacillus suntoryeus).